Consider the following 207-residue polypeptide: Adenylyl-sulfate kinase (207 aa).

34–41 provides a ligand contact to ATP; it reads GLSGSGKS. Ser108 acts as the Phosphoserine intermediate in catalysis.

This sequence belongs to the APS kinase family.

It carries out the reaction adenosine 5'-phosphosulfate + ATP = 3'-phosphoadenylyl sulfate + ADP + H(+). Its pathway is sulfur metabolism; hydrogen sulfide biosynthesis; sulfite from sulfate: step 2/3. Its function is as follows. Catalyzes the synthesis of activated sulfate. This Lactiplantibacillus plantarum (strain ATCC BAA-793 / NCIMB 8826 / WCFS1) (Lactobacillus plantarum) protein is Adenylyl-sulfate kinase.